We begin with the raw amino-acid sequence, 340 residues long: Centromere protein N (340 aa).

Ser-227 and Ser-236 each carry phosphoserine.

This sequence belongs to the CENP-N/CHL4 family. Component of the CENPA-NAC complex, at least composed of CENPA, CENPC, CENPH, CENPM, CENPN, CENPT and CENPU. The CENPA-NAC complex interacts with the CENPA-CAD complex, composed of CENPI, CENPK, CENPL, CENPO, CENPP, CENPQ, CENPR and CENPS. Interacts directly with CENPA. Identified in a centromere complex containing histones H2A, H2B and H4, and at least CENPA, CENPB, CENPC, CENPT, CENPN, HJURP, SUPT16H, SSRP1 and RSF1.

It localises to the nucleus. Its subcellular location is the chromosome. The protein localises to the centromere. The protein resides in the kinetochore. Its function is as follows. Component of the CENPA-NAC (nucleosome-associated) complex, a complex that plays a central role in assembly of kinetochore proteins, mitotic progression and chromosome segregation. The CENPA-NAC complex recruits the CENPA-CAD (nucleosome distal) complex and may be involved in incorporation of newly synthesized CENPA into centromeres. CENPN is the first protein to bind specifically to CENPA nucleosomes and the direct binding of CENPA nucleosomes by CENPN is required for centromere assembly. Required for chromosome congression and efficiently align the chromosomes on a metaphase plate. The protein is Centromere protein N (Cenpn) of Rattus norvegicus (Rat).